A 263-amino-acid chain; its full sequence is Uracil-DNA glycosylase (263 aa).

The active-site Proton acceptor is the D94.

It belongs to the uracil-DNA glycosylase (UDG) superfamily. UNG family.

It is found in the cytoplasm. It catalyses the reaction Hydrolyzes single-stranded DNA or mismatched double-stranded DNA and polynucleotides, releasing free uracil.. In terms of biological role, excises uracil residues from the DNA which can arise as a result of misincorporation of dUMP residues by DNA polymerase or due to deamination of cytosine. This is Uracil-DNA glycosylase from Ralstonia pickettii (strain 12J).